The chain runs to 279 residues: MAIRKLAPVTPGSRFMSYPGFDEITKSEPEKSLLVPVKRTGGRNRAGRITSRHMGGGHKRHYRIIDFKRNKDGVPATVASIEYDPNRSSRIALLHYNDGEKRYILAPKGLKVGEKVESGEKVEIKTGNTMPLKNIPLGTDIHNVEMRAGKGGQIVRSAGAFAVLAAREGDYVTLKLPSGEIRKVRVECRATIGVVGNAEHENIVLGKAGRSRWLGIRPQTRGMAMNPVDHPMGGGEGKSKSGGGRRHPKSPWGQLAKGLKTRNKKKASQKLIVRGRNAK.

Residues 222-279 (GMAMNPVDHPMGGGEGKSKSGGGRRHPKSPWGQLAKGLKTRNKKKASQKLIVRGRNAK) form a disordered region. Residues 232–242 (MGGGEGKSKSG) are compositionally biased toward gly residues. The segment covering 259–268 (LKTRNKKKAS) has biased composition (basic residues).

Belongs to the universal ribosomal protein uL2 family. In terms of assembly, part of the 50S ribosomal subunit. Forms a bridge to the 30S subunit in the 70S ribosome.

Functionally, one of the primary rRNA binding proteins. Required for association of the 30S and 50S subunits to form the 70S ribosome, for tRNA binding and peptide bond formation. It has been suggested to have peptidyltransferase activity; this is somewhat controversial. Makes several contacts with the 16S rRNA in the 70S ribosome. This Chlorobium phaeobacteroides (strain DSM 266 / SMG 266 / 2430) protein is Large ribosomal subunit protein uL2.